The following is a 361-amino-acid chain: tRNA pseudouridine synthase D (361 aa).

D76 functions as the Nucleophile in the catalytic mechanism. Residues 151 to 318 enclose the TRUD domain; that stretch reads GIPNYFGYQR…EQGSRRLAWI (168 aa).

Belongs to the pseudouridine synthase TruD family.

The catalysed reaction is uridine(13) in tRNA = pseudouridine(13) in tRNA. Functionally, responsible for synthesis of pseudouridine from uracil-13 in transfer RNAs. The polypeptide is tRNA pseudouridine synthase D (Wolinella succinogenes (strain ATCC 29543 / DSM 1740 / CCUG 13145 / JCM 31913 / LMG 7466 / NCTC 11488 / FDC 602W) (Vibrio succinogenes)).